Consider the following 1370-residue polypeptide: Putative surface protein SA2285 (1370 aa).

A signal peptide spans methionine 1–alanine 50. Disordered regions lie at residues asparagine 77 to proline 116, lysine 439 to threonine 472, and glutamate 495 to glutamate 1344. Composition is skewed to basic and acidic residues over residues aspartate 96–proline 116, lysine 450–lysine 460, glycine 504–proline 522, serine 553–asparagine 569, lysine 578–lysine 588, serine 605–isoleucine 618, glycine 632–proline 650, serine 681–asparagine 697, lysine 706–lysine 716, serine 733–isoleucine 746, glycine 760–proline 778, serine 809–asparagine 825, lysine 834–lysine 844, serine 861–isoleucine 874, glycine 888–proline 906, serine 937–asparagine 953, lysine 962–lysine 972, serine 989–isoleucine 1002, glycine 1016–proline 1034, serine 1065–asparagine 1081, lysine 1090–lysine 1100, serine 1117–valine 1130, lysine 1174–lysine 1185, and phenylalanine 1202–glutamine 1221. One can recognise a G5 1 domain in the interval serine 418–threonine 500. In terms of domain architecture, G5 2 spans tyrosine 546 to threonine 628. A G5 3 domain is found at tyrosine 674–threonine 756. A G5 4 domain is found at tyrosine 802 to threonine 884. The G5 5 domain maps to tyrosine 930 to threonine 1012. The region spanning tyrosine 1058–lysine 1140 is the G5 6 domain. Residues histidine 1186 to lysine 1268 form the G5 7 domain. Residues glutamine 1224 to proline 1238 are compositionally biased toward polar residues. The segment covering glutamate 1252 to serine 1282 has biased composition (basic and acidic residues). Positions leucine 1338–glycine 1342 match the LPXTG sorting signal motif. Pentaglycyl murein peptidoglycan amidated threonine is present on threonine 1341. Residues glycine 1342 to asparagine 1370 constitute a propeptide, removed by sortase.

It is found in the secreted. Its subcellular location is the cell wall. The polypeptide is Putative surface protein SA2285 (Staphylococcus aureus (strain N315)).